A 705-amino-acid polypeptide reads, in one-letter code: MVRATPIHRYRNIGIMAHIDAGKTTTSERILFYAGVCHQMGEVHDGAAVMDWMEQEQERGITITSAATTVFWSGMDKSMPQHRFNIIDTPGHVDFTIEVERSLRVLDGAVFVLCAVGGVQPQSETVWRQANKYFVPRMAFVNKMDRTGANFDKVVEQLKARLGAYPVPMQVPIGAEDGFEGVIDLLKMKAIHWDAASQGTVFEYRDIPIELVDKASKARAFMVEAAAEATEELMDKYLNEGELKEQEILEGLRERTLKVEIIPVFCGSAFKNKGVQAMLDGVIHLLPSPADRPPVQGLDEKGNECRCKASDSEPFSALAFKIMTDPFVGSLTFFRVYSGVLNSGDQVYNSVKLKKERVGRILQMHSNQRDEIKEVRAGDIAAAVGLKDVTTGDTLCDQNHIITLERMIFPEPVISMAVEPKTKSDQEKMGMALGRLAQEDPSFRVKTDEESGQTIISGMGELHLDIIVDRMRREFNVEANVGKPQVAYRETIRKSDVKSDYKHVKQSGGKGQYGHVVIEISPMSDVDKQHPDVKGDFLFINEITGGVIPKEFISPIEKGLRETITSGPLAGFPVVGVKVKLVFGSYHDVDSSEMAFKLAASMAFKQGFAKANPVLLEPIMKVEIVSPEDYLGDIMGDVSRRRGVLQGQDDSLSGKVINAMIPLGEMFGYATSLRSMTQGRATFAMEFDHYEEAPTNIADTVIKKT.

The region spanning histidine 8–alanine 290 is the tr-type G domain. Residues alanine 17 to threonine 24, aspartate 88 to histidine 92, and asparagine 142 to aspartate 145 contribute to the GTP site.

It belongs to the TRAFAC class translation factor GTPase superfamily. Classic translation factor GTPase family. EF-G/EF-2 subfamily.

It localises to the cytoplasm. In terms of biological role, catalyzes the GTP-dependent ribosomal translocation step during translation elongation. During this step, the ribosome changes from the pre-translocational (PRE) to the post-translocational (POST) state as the newly formed A-site-bound peptidyl-tRNA and P-site-bound deacylated tRNA move to the P and E sites, respectively. Catalyzes the coordinated movement of the two tRNA molecules, the mRNA and conformational changes in the ribosome. This Xylella fastidiosa (strain M23) protein is Elongation factor G.